The primary structure comprises 235 residues: Large ribosomal subunit protein uL1c (235 aa).

Belongs to the universal ribosomal protein uL1 family. As to quaternary structure, part of the 50S ribosomal subunit.

It localises to the plastid. It is found in the chloroplast. Binds directly to 23S rRNA. Might be involved in E site tRNA release (Potential). The sequence is that of Large ribosomal subunit protein uL1c (rpl1) from Gracilaria tenuistipitata var. liui (Red alga).